The primary structure comprises 430 residues: Serine--tRNA ligase (430 aa).

234–236 serves as a coordination point for L-serine; the sequence is TAE. Residue 265 to 267 participates in ATP binding; sequence RRE. Glu-288 provides a ligand contact to L-serine. 352 to 355 is a binding site for ATP; the sequence is EISS. Ser-388 provides a ligand contact to L-serine.

Belongs to the class-II aminoacyl-tRNA synthetase family. Type-1 seryl-tRNA synthetase subfamily. In terms of assembly, homodimer. The tRNA molecule binds across the dimer.

It localises to the cytoplasm. It carries out the reaction tRNA(Ser) + L-serine + ATP = L-seryl-tRNA(Ser) + AMP + diphosphate + H(+). The enzyme catalyses tRNA(Sec) + L-serine + ATP = L-seryl-tRNA(Sec) + AMP + diphosphate + H(+). It participates in aminoacyl-tRNA biosynthesis; selenocysteinyl-tRNA(Sec) biosynthesis; L-seryl-tRNA(Sec) from L-serine and tRNA(Sec): step 1/1. Functionally, catalyzes the attachment of serine to tRNA(Ser). Is also able to aminoacylate tRNA(Sec) with serine, to form the misacylated tRNA L-seryl-tRNA(Sec), which will be further converted into selenocysteinyl-tRNA(Sec). The chain is Serine--tRNA ligase from Thermosynechococcus vestitus (strain NIES-2133 / IAM M-273 / BP-1).